The following is a 55-amino-acid chain: Large ribosomal subunit protein bL33 (55 aa).

The protein belongs to the bacterial ribosomal protein bL33 family.

This is Large ribosomal subunit protein bL33 from Klebsiella pneumoniae (strain 342).